Here is a 379-residue protein sequence, read N- to C-terminus: Armadillo repeat-containing X-linked protein 3 (379 aa).

Residues 1–6 lie on the Mitochondrial intermembrane side of the membrane; the sequence is MGYARK. 2 mitochondrion outer membrane (MOM)-targeting sequence regions span residues 1 to 6 and 26 to 37; these read MGYARK and RLTRGRKQNKEK. The chain crosses the membrane as a helical; Signal-anchor span at residues 7 to 29; sequence VGWVTAGLVIGAGACYCIYRLTR. At 30 to 379 the chain is on the cytoplasmic side; sequence GRKQNKEKMA…AEHMFPKSQE (350 aa). Serine 61, serine 67, and serine 72 each carry phosphoserine. The interval 89–98 is nuclear localization signal; sequence RARARARARA. Over residues 95–106 the composition is skewed to basic residues; it reads RARATRARRAVQ. Residues 95-116 form a disordered region; the sequence is RARATRARRAVQKRASPNSDDT. The residue at position 110 (serine 110) is a Phosphoserine. 3 ARM repeats span residues 111–151, 153–192, and 233–272; these read PNSD…NNAA, AFNR…NLSV, and VTNE…NLAE.

This sequence belongs to the eutherian X-chromosome-specific Armcx family. In terms of assembly, interacts (via ARM domain) with MIRO1, MIRO2 and TRAK2. The interaction with Miro is calcium-dependent. Interacts with SOX10.

Its subcellular location is the mitochondrion outer membrane. The protein resides in the cytoplasm. It is found in the nucleus. In terms of biological role, regulates mitochondrial aggregation and transport in axons in living neurons. May link mitochondria to the TRAK2-kinesin motor complex via its interaction with Miro and TRAK2. Mitochondrial distribution and dynamics is regulated through ARMCX3 protein degradation, which is promoted by PCK and negatively regulated by WNT1. Enhances the SOX10-mediated transactivation of the neuronal acetylcholine receptor subunit alpha-3 and beta-4 subunit gene promoters. The chain is Armadillo repeat-containing X-linked protein 3 (ARMCX3) from Homo sapiens (Human).